A 524-amino-acid chain; its full sequence is Alanine aminotransferase 2 (524 aa).

K342 is subject to N6-(pyridoxal phosphate)lysine.

This sequence belongs to the class-I pyridoxal-phosphate-dependent aminotransferase family. Alanine aminotransferase subfamily. In terms of assembly, homodimer. Pyridoxal 5'-phosphate is required as a cofactor.

It carries out the reaction L-alanine + 2-oxoglutarate = pyruvate + L-glutamate. The protein operates within amino-acid degradation; L-alanine degradation via transaminase pathway; pyruvate from L-alanine: step 1/1. Its function is as follows. Catalyzes the reversible transamination between alanine and 2-oxoglutarate to form pyruvate and glutamate. In Xenopus tropicalis (Western clawed frog), this protein is Alanine aminotransferase 2 (gpt2).